We begin with the raw amino-acid sequence, 64 residues long: Small ribosomal subunit protein bS21 (64 aa).

The interval 39–64 (EKPSVKRKKKALAAKKRAVKKARKSF) is disordered. Residues 43–64 (VKRKKKALAAKKRAVKKARKSF) are compositionally biased toward basic residues.

The protein belongs to the bacterial ribosomal protein bS21 family.

This Myxococcus xanthus protein is Small ribosomal subunit protein bS21 (rpsU).